The sequence spans 245 residues: MAFEVIPAVDMRGGKCVQLVQGVPGSEIVSLNDPLAVALDWIGKGAKTLHLVDLDGAIEGERKNAPIIEKIVQACREKGVSIQVGGGIRSFEDAASLLELGVSRIILGTAALQNPELVKQLSDAFGSSCVNVALDAKNGKISIKGWTEECAQTPVEMGREFEELGAGSLLFTNIDTEGLMQGVNPGPTRELVESVSIPVIASGGVSSLEDLKVLKQTGASGVVVGSALYTGRFTLEAAIETIRND.

The active-site Proton acceptor is D10. Residue D135 is the Proton donor of the active site.

Belongs to the HisA/HisF family.

The protein resides in the cytoplasm. The catalysed reaction is 1-(5-phospho-beta-D-ribosyl)-5-[(5-phospho-beta-D-ribosylamino)methylideneamino]imidazole-4-carboxamide = 5-[(5-phospho-1-deoxy-D-ribulos-1-ylimino)methylamino]-1-(5-phospho-beta-D-ribosyl)imidazole-4-carboxamide. Its pathway is amino-acid biosynthesis; L-histidine biosynthesis; L-histidine from 5-phospho-alpha-D-ribose 1-diphosphate: step 4/9. This Methanosarcina acetivorans (strain ATCC 35395 / DSM 2834 / JCM 12185 / C2A) protein is 1-(5-phosphoribosyl)-5-[(5-phosphoribosylamino)methylideneamino] imidazole-4-carboxamide isomerase.